The chain runs to 152 residues: Clitocypin-5 (152 aa).

As to quaternary structure, homodimer.

Binds and inhibits cysteine proteinases. Inhibits most strongly papain and cathepsin L, more weakly bromelain and cathepsin B while it is completely ineffective against cathepsin H. This chain is Clitocypin-5 (clt5), found in Clitocybe nebularis (Clouded agaric).